A 421-amino-acid polypeptide reads, in one-letter code: NADH-quinone oxidoreductase subunit F (421 aa).

Position 54-63 (54-63) interacts with NAD(+); it reads GRGGAGFSTG. An FMN-binding site is contributed by 166–213; it reads GAGAYICGEETALLESLEGKKGMPRLKPPFPAGFGLYGCPTTINNVES. Residues C344, C347, C350, and C390 each coordinate [4Fe-4S] cluster.

It belongs to the complex I 51 kDa subunit family. The cofactor is FMN. [4Fe-4S] cluster is required as a cofactor.

The catalysed reaction is a quinone + NADH + 5 H(+)(in) = a quinol + NAD(+) + 4 H(+)(out). Functionally, NDH-1 shuttles electrons from NADH, via FMN and iron-sulfur (Fe-S) centers, to quinones in the respiratory chain. Couples the redox reaction to proton translocation (for every two electrons transferred, four hydrogen ions are translocated across the cytoplasmic membrane), and thus conserves the redox energy in a proton gradient. The sequence is that of NADH-quinone oxidoreductase subunit F (nuoF) from Rickettsia rickettsii (strain Sheila Smith).